Here is an 865-residue protein sequence, read N- to C-terminus: Protein translocase subunit SecA (865 aa).

ATP-binding positions include Q85, 103–107, and D505; that span reads GEGKT. Zn(2+) is bound by residues C847, C849, C858, and H859.

Belongs to the SecA family. In terms of assembly, monomer and homodimer. Part of the essential Sec protein translocation apparatus which comprises SecA, SecYEG and auxiliary proteins SecDF. Other proteins may also be involved. Requires Zn(2+) as cofactor.

It is found in the cell membrane. Its subcellular location is the cytoplasm. It carries out the reaction ATP + H2O + cellular proteinSide 1 = ADP + phosphate + cellular proteinSide 2.. Its function is as follows. Part of the Sec protein translocase complex. Interacts with the SecYEG preprotein conducting channel. Has a central role in coupling the hydrolysis of ATP to the transfer of proteins into and across the cell membrane, serving as an ATP-driven molecular motor driving the stepwise translocation of polypeptide chains across the membrane. This Lactococcus lactis subsp. lactis (strain IL1403) (Streptococcus lactis) protein is Protein translocase subunit SecA.